The following is a 1441-amino-acid chain: uncharacterized protein (1441 aa).

13 disordered regions span residues 1–95 (MGFL…EVIS), 150–204 (NGGI…QQQF), 224–289 (KPHQ…GEGE), 401–477 (HSNG…QLHQ), 529–661 (RHES…QPQQ), 680–760 (LNKD…KSQT), 776–810 (RKSS…HIQQ), 849–899 (QQQF…TQQL), 980–1118 (RGGS…DNNN), 1161–1185 (KSLK…NENN), 1209–1321 (NIES…YRSY), 1348–1402 (GHNS…HIFF), and 1421–1441 (LKFN…SILE). The segment covering 19-38 (NDNSFDGGSSSYNNNNNNNN) has biased composition (low complexity). The segment covering 39–56 (QPITYTPTAIRSPNNKTM) has biased composition (polar residues). Composition is skewed to low complexity over residues 57-91 (SQSQ…GNGN), 153-187 (ISQP…TTTP), 227-283 (QQQQ…SLQN), 416-445 (NNNN…GINN), 555-564 (GNTDGVNIDN), and 572-635 (NNNN…TNNT). Residues 636–645 (ATPSVINGDS) are compositionally biased toward polar residues. Low complexity-rich tracts occupy residues 648–661 (QEQP…QPQQ) and 680–700 (LNKD…DDNN). A compositionally biased stretch (basic and acidic residues) spans 703 to 720 (SREEMENILKKSQQDSNK). Polar residues predominate over residues 729–751 (EDSNSGSPTFQDFQSSAAASNVS). 2 stretches are compositionally biased toward low complexity: residues 780-810 (DSLN…HIQQ) and 849-880 (QQQF…NSGS). Over residues 881 to 892 (INGGSNSGGGGV) the composition is skewed to gly residues. Polar residues predominate over residues 981-994 (GGSTNRTTPPFLTP). Low complexity predominate over residues 995-1067 (NTSQTNLSSL…NKQTANNTTN (73 aa)). Residues 1068 to 1087 (DFSFDQNTDLRSSTNSLTIG) are compositionally biased toward polar residues. Residues 1088-1118 (SNSNFSSLKNSLNLENPENNNNPDKNVDNNN) show a composition bias toward low complexity. Composition is skewed to low complexity over residues 1225–1249 (DNNN…SLRN) and 1257–1291 (NISN…NNNE). Residues 1362 to 1373 (RHKDSIGDKEMD) show a composition bias toward basic and acidic residues.

This is an uncharacterized protein from Dictyostelium discoideum (Social amoeba).